The following is a 293-amino-acid chain: Nucleotide-binding protein cauri_1197 (293 aa).

Position 16–23 (16–23) interacts with ATP; that stretch reads GMSGGGLT. 67–70 is a GTP binding site; the sequence is DVRS.

This sequence belongs to the RapZ-like family.

Functionally, displays ATPase and GTPase activities. The sequence is that of Nucleotide-binding protein cauri_1197 from Corynebacterium aurimucosum (strain ATCC 700975 / DSM 44827 / CIP 107346 / CN-1) (Corynebacterium nigricans).